A 647-amino-acid polypeptide reads, in one-letter code: DNA mismatch repair protein MutL (647 aa).

It belongs to the DNA mismatch repair MutL/HexB family.

This protein is involved in the repair of mismatches in DNA. It is required for dam-dependent methyl-directed DNA mismatch repair. May act as a 'molecular matchmaker', a protein that promotes the formation of a stable complex between two or more DNA-binding proteins in an ATP-dependent manner without itself being part of a final effector complex. The polypeptide is DNA mismatch repair protein MutL (Bacillus cereus (strain 03BB102)).